The chain runs to 504 residues: L-carnitine/gamma-butyrobetaine antiporter (504 aa).

12 helical membrane-spanning segments follow: residues 10-30 (MEPK…WLTV), 51-71 (WGWA…WLVF), 92-112 (IFMM…SIEI), 143-163 (GPLP…FFFV), 195-215 (FYLV…TPLV), 231-251 (LDAI…ACGL), 263-283 (SYLS…SFIM), 316-336 (WSVF…IFLA), 347-367 (LCFG…TVLG), 398-418 (WAAL…CFIA), 446-466 (LLVR…LLAL), and 475-495 (AIIA…LSFI).

Belongs to the BCCT transporter (TC 2.A.15) family. CaiT subfamily. As to quaternary structure, homotrimer.

It localises to the cell inner membrane. The enzyme catalyses 4-(trimethylamino)butanoate(in) + (R)-carnitine(out) = 4-(trimethylamino)butanoate(out) + (R)-carnitine(in). The protein operates within amine and polyamine metabolism; carnitine metabolism. Functionally, catalyzes the exchange of L-carnitine for gamma-butyrobetaine. This is L-carnitine/gamma-butyrobetaine antiporter from Shigella dysenteriae serotype 1 (strain Sd197).